The primary structure comprises 282 residues: MSDFSMETLKNLRQQTGVGLTKCKEALEHAKGNLEDAVVYLRKLGLASAGKKEHRETKEGVIAALVDERGAALVEVNVETDFVANNSVFRAFVTSLLSDLLDHKLSDVEALARVMSSQEPSLSVEELKAVTMQTVGENIRISRAFYTPVNSGQSVGIYSHGNGKAVAIVFLSGSENQEALAKDIAMHIVASQPQFLSKESVPQEILEREREVFSSQVAGKPQEVVEKITQGKFKAFFQEACLLEQAFIKDPEVTIQGLIDRAAKASGEPLRVEHFVFWKMGA.

The interval 80–83 (TDFV) is involved in Mg(2+) ion dislocation from EF-Tu.

It belongs to the EF-Ts family.

It is found in the cytoplasm. Associates with the EF-Tu.GDP complex and induces the exchange of GDP to GTP. It remains bound to the aminoacyl-tRNA.EF-Tu.GTP complex up to the GTP hydrolysis stage on the ribosome. This chain is Elongation factor Ts, found in Chlamydia trachomatis serovar L2b (strain UCH-1/proctitis).